Here is a 343-residue protein sequence, read N- to C-terminus: 3-hydroxy-3-methylglutaryl-CoA lyase, cytoplasmic (343 aa).

The N-myristoyl glycine moiety is linked to residue glycine 2. The Pyruvate carboxyltransferase domain occupies 48–315; that stretch reads VKIVEVGPRD…NTGVDLHKVM (268 aa). Arginine 56 is a binding site for substrate. A divalent metal cation is bound by residues aspartate 57, histidine 248, and histidine 250. Cysteine 281 is an active-site residue. Residue asparagine 290 participates in a divalent metal cation binding.

It belongs to the HMG-CoA lyase family. Requires a divalent metal cation as cofactor. In terms of tissue distribution, present at high level in duodenum and small intestine (at protein level).

The protein resides in the cytoplasm. It localises to the cytosol. It is found in the endoplasmic reticulum membrane. It catalyses the reaction (3S)-3-hydroxy-3-methylglutaryl-CoA = acetoacetate + acetyl-CoA. The protein operates within metabolic intermediate metabolism; (S)-3-hydroxy-3-methylglutaryl-CoA degradation; acetoacetate from (S)-3-hydroxy-3-methylglutaryl-CoA: step 1/1. Non-mitochondrial 3-hydroxy-3-methylglutaryl-CoA lyase that catalyzes a cation-dependent cleavage of (S)-3-hydroxy-3-methylglutaryl-CoA into acetyl-CoA and acetoacetate, a key step in ketogenesis, the products of which support energy production in nonhepatic animal tissues. This chain is 3-hydroxy-3-methylglutaryl-CoA lyase, cytoplasmic (Hmgcll1), found in Rattus norvegicus (Rat).